The chain runs to 312 residues: Acetyl-coenzyme A carboxylase carboxyl transferase subunit alpha (312 aa).

A CoA carboxyltransferase C-terminal domain is found at 36–286 (NLEKEISKTY…ADYVKKSLNE (251 aa)).

This sequence belongs to the AccA family. In terms of assembly, acetyl-CoA carboxylase is a heterohexamer composed of biotin carboxyl carrier protein (AccB), biotin carboxylase (AccC) and two subunits each of ACCase subunit alpha (AccA) and ACCase subunit beta (AccD).

It is found in the cytoplasm. It carries out the reaction N(6)-carboxybiotinyl-L-lysyl-[protein] + acetyl-CoA = N(6)-biotinyl-L-lysyl-[protein] + malonyl-CoA. It functions in the pathway lipid metabolism; malonyl-CoA biosynthesis; malonyl-CoA from acetyl-CoA: step 1/1. Functionally, component of the acetyl coenzyme A carboxylase (ACC) complex. First, biotin carboxylase catalyzes the carboxylation of biotin on its carrier protein (BCCP) and then the CO(2) group is transferred by the carboxyltransferase to acetyl-CoA to form malonyl-CoA. This chain is Acetyl-coenzyme A carboxylase carboxyl transferase subunit alpha, found in Campylobacter jejuni subsp. doylei (strain ATCC BAA-1458 / RM4099 / 269.97).